A 387-amino-acid chain; its full sequence is Oxidase FUB9 (387 aa).

Residues 1–20 (MSRTNLPIQPAKMSDATSSK) are disordered. Residues 18 to 379 (SSKPQIFSIQ…TPAHLSILNA (362 aa)) enclose the FMN hydroxy acid dehydrogenase domain. Residue Tyr44 coordinates a 2-oxocarboxylate. FMN is bound by residues Ser126, Gln150, and Thr178. Arg187 is a binding site for a 2-oxocarboxylate. Lys250 provides a ligand contact to FMN. The Proton acceptor role is filled by His274. Arg277 lines the a 2-oxocarboxylate pocket. FMN-binding positions include 305–309 (DGGFR) and 328–329 (GR).

The protein belongs to the FMN-dependent alpha-hydroxy acid dehydrogenase family. FMN serves as cofactor.

Its pathway is mycotoxin biosynthesis. Oxidase; part of the gene cluster that mediates the biosynthesis of fusaric acid, a mycotoxin with low to moderate toxicity to animals and humans, but with high phytotoxic properties. L-aspartate is suggested as fusaric acid amino acid precursor that is activated and further processed to O-acetyl-L-homoserine by cluster enzymes aspartate kinase FUB3 and homoserine O-acetyltransferase FUB5, as well as enzymes of the primary metabolism. The polyketide synthase (PKS) FUB1 generates the triketide trans-2-hexenal which is presumptively released by the hydrolase FUB4 and linked to the NRPS-bound amino acid precursor by NAD(P)-dependent dehydrogenase FUB6. FUB1, FUB4, and the non-canonical NRPS Fub8 may form an enzyme complex. Further processing of the NRPS-bound intermediate might be carried out by FUB6 and the sulfhydrylase FUB7, enabling a spontaneous electrocyclization to close the carbon backbone of fusaric acid. Dihydrofusaric acid is likely to be released via reduction by the thioester reductase (TR) domain of FUB8 whereupon the final oxidation to fusaric acid may (also) be performed by the FMN-dependent dehydrogenase FUB9. This chain is Oxidase FUB9, found in Fusarium oxysporum f. sp. lycopersici (strain 4287 / CBS 123668 / FGSC 9935 / NRRL 34936) (Fusarium vascular wilt of tomato).